A 103-amino-acid polypeptide reads, in one-letter code: Matrix Gla protein (103 aa).

An N-terminal signal peptide occupies residues 1 to 19; it reads MKSLLLLSILAALAVAALC. E21 is modified (4-carboxyglutamate; partial). S22, S25, and S28 each carry phosphoserine. The 47-residue stretch at 51–97 folds into the Gla domain; the sequence is RAKAQERIRELNKPQYELNREACDDFKLCERYAMVYGYNAAYDRYFR. 4-carboxyglutamate is present on residues E56, E60, E67, and E71. A disulfide bridge connects residues C73 and C79. Residues 99 to 102 constitute a propeptide, removed in short form; probably by carboxypeptidase N; that stretch reads RRGA. Residue K103 is a propeptide, removed in long form; probably by carboxypeptidase H.

The protein belongs to the osteocalcin/matrix Gla protein family. In terms of processing, requires vitamin K-dependent gamma-carboxylation for its function.

The protein resides in the secreted. Associates with the organic matrix of bone and cartilage. Thought to act as an inhibitor of bone formation. This Bos taurus (Bovine) protein is Matrix Gla protein (MGP).